A 502-amino-acid polypeptide reads, in one-letter code: mRNA cap guanine-N(7) methyltransferase (502 aa).

Residues Met-1–Ser-118 are disordered. The span at Leu-93–Met-115 shows a compositional bias: basic and acidic residues. An mRNA cap 0 methyltransferase domain is found at Ser-146–Val-502. Asn-155–Asn-156 lines the mRNA pocket. S-adenosyl-L-methionine contacts are provided by residues Lys-159, Gly-202, Asp-226, Asp-264, Met-307 to Thr-309, and Tyr-312. Residues Glu-360–Glu-369 show a composition bias toward basic and acidic residues. A disordered region spans residues Glu-360–Asp-381. Positions Ala-370–Asp-381 are enriched in acidic residues.

Belongs to the class I-like SAM-binding methyltransferase superfamily. mRNA cap 0 methyltransferase family.

The protein resides in the nucleus. The enzyme catalyses a 5'-end (5'-triphosphoguanosine)-ribonucleoside in mRNA + S-adenosyl-L-methionine = a 5'-end (N(7)-methyl 5'-triphosphoguanosine)-ribonucleoside in mRNA + S-adenosyl-L-homocysteine. In terms of biological role, responsible for methylating the 5'-cap structure of mRNAs. This chain is mRNA cap guanine-N(7) methyltransferase (abd1), found in Aspergillus oryzae (strain ATCC 42149 / RIB 40) (Yellow koji mold).